The chain runs to 416 residues: MYLQGFGNYHHSEAVKGALPPNQNSPQHCSLGLYAEQLSGTAFTRPRHNNLRSWLYRILPTVTQGTYYPYEFNIMQPFVDELSPNAMRWSPLYNSSQIKCDFVEGLFHIAGSPLVNTYTYYCNHSMSDKYFANNDGELLFVPYAGEIHLHTEFGKLMLSSGSIAVIPRGVKFKVEVISKEAKGYLCENSGNPLTLPQLGPIGANGLANPRHFQYPVAAFENSGSEHTIICKNQKKLWFTVCNHSPLNVVAWHGNYAPYCYDLSLFNTINTVSFDHPDPSIFTVLTSESEIPGVSNLDFVIFPPRWMVAEHTFRPPYFHRNYMNELMGLVYGEYDAKKEGFIPGGISIHNCMTPHGPDYESYEIAASQDLKPNYINSLAFMFETKDYWQVTEQAYRHPSRQMDYLNCWQGFKIEFSQ.

His275 serves as the catalytic Proton acceptor. Residues His318 and Glu324 each contribute to the Fe cation site. The homogentisate site is built by Tyr333 and His354. His354 provides a ligand contact to Fe cation.

It belongs to the homogentisate dioxygenase family. Hexamer; dimer of trimers. It depends on Fe cation as a cofactor.

It catalyses the reaction homogentisate + O2 = 4-maleylacetoacetate + H(+). It functions in the pathway amino-acid degradation; L-phenylalanine degradation; acetoacetate and fumarate from L-phenylalanine: step 4/6. In terms of biological role, involved in the catabolism of homogentisate (2,5-dihydroxyphenylacetate or 2,5-OH-PhAc), a central intermediate in the degradation of phenylalanine and tyrosine. Catalyzes the oxidative ring cleavage of the aromatic ring of homogentisate to yield maleylacetoacetate. The protein is Homogentisate 1,2-dioxygenase of Legionella pneumophila subsp. pneumophila (strain Philadelphia 1 / ATCC 33152 / DSM 7513).